The following is a 1450-amino-acid chain: Auxilin-like protein 1 (1450 aa).

Disordered regions lie at residues 117 to 142, 241 to 318, 357 to 383, 459 to 480, 512 to 541, 556 to 575, 908 to 946, 961 to 1046, 1077 to 1168, 1192 to 1241, and 1254 to 1328; these read NEDK…GKKS, STRD…AESS, DSKI…SQIL, NSKQ…TKQE, SQKD…SQEM, EETP…EKSE, DRSE…RSSF, EQHR…ELEH, GAAT…ERKQ, AGKT…AERA, and AMEK…SDRA. Residues 316–344 adopt a coiled-coil conformation; it reads ESSAALKKAIEEAQIRMNIAKQMMEKKKS. Residues 357-366 are compositionally biased toward basic and acidic residues; it reads DSKIENKGNT. Basic and acidic residues-rich tracts occupy residues 512 to 524, 564 to 575, 908 to 923, 1037 to 1046, 1117 to 1131, 1147 to 1168, and 1192 to 1226; these read SQKD…EKEN, SKSEMNIEEKSE, DRSE…RFDQ, RNGDKKELEH, NMKE…RSSM, ETVE…ERKQ, and AGKT…KLSS. Coiled-coil stretches lie at residues 1142–1184 and 1219–1257; these read SQNK…RERA and EVND…AMEK. Residues 1270–1299 are compositionally biased toward low complexity; it reads SYGGSKSFSSSGERRGSSSSGTENKSSGPS. A compositionally biased stretch (basic and acidic residues) spans 1310 to 1328; that stretch reads PIQRCKARSERHQRTSDRA. Residues 1327 to 1355 are a coiled coil; that stretch reads RAAEALAEKKLRDLKTQKEQTERNRLAEA. The region spanning 1377–1450 is the J domain; sequence TLQYILGAES…AWNKFGADER (74 aa).

The chain is Auxilin-like protein 1 (AUL1) from Arabidopsis thaliana (Mouse-ear cress).